A 402-amino-acid chain; its full sequence is Imidazolonepropionase (402 aa).

His-69 and His-71 together coordinate Fe(3+). Zn(2+) contacts are provided by His-69 and His-71. Positions 78, 141, and 174 each coordinate 4-imidazolone-5-propanoate. Tyr-141 serves as a coordination point for N-formimidoyl-L-glutamate. His-239 contributes to the Fe(3+) binding site. His-239 is a binding site for Zn(2+). Gln-242 is a 4-imidazolone-5-propanoate binding site. Residue Asp-314 participates in Fe(3+) binding. Asp-314 is a Zn(2+) binding site. Residues Asn-316 and Gly-318 each contribute to the N-formimidoyl-L-glutamate site. Position 319 (Thr-319) interacts with 4-imidazolone-5-propanoate.

It belongs to the metallo-dependent hydrolases superfamily. HutI family. Requires Zn(2+) as cofactor. Fe(3+) is required as a cofactor.

It localises to the cytoplasm. It carries out the reaction 4-imidazolone-5-propanoate + H2O = N-formimidoyl-L-glutamate. It participates in amino-acid degradation; L-histidine degradation into L-glutamate; N-formimidoyl-L-glutamate from L-histidine: step 3/3. Functionally, catalyzes the hydrolytic cleavage of the carbon-nitrogen bond in imidazolone-5-propanoate to yield N-formimidoyl-L-glutamate. It is the third step in the universal histidine degradation pathway. The sequence is that of Imidazolonepropionase from Maricaulis maris (strain MCS10) (Caulobacter maris).